We begin with the raw amino-acid sequence, 388 residues long: L-lactate dehydrogenase (388 aa).

Residues Met1–Glu380 form the FMN hydroxy acid dehydrogenase domain. Residue Tyr24 coordinates substrate. Positions 106 and 127 each coordinate FMN. Tyr129 provides a ligand contact to substrate. Position 155 (Thr155) interacts with FMN. Position 164 (Arg164) interacts with substrate. An FMN-binding site is contributed by Lys251. Residue His275 is the Proton acceptor of the active site. Arg278 contacts substrate. Residue Asp306 to Arg330 coordinates FMN.

The protein belongs to the FMN-dependent alpha-hydroxy acid dehydrogenase family. It depends on FMN as a cofactor.

The protein resides in the cell inner membrane. It carries out the reaction (S)-lactate + A = pyruvate + AH2. Functionally, catalyzes the conversion of L-lactate to pyruvate. Is coupled to the respiratory chain. The chain is L-lactate dehydrogenase from Xanthobacter autotrophicus (strain ATCC BAA-1158 / Py2).